Here is a 213-residue protein sequence, read N- to C-terminus: NADH dehydrogenase [ubiquinone] iron-sulfur protein 7, mitochondrial (213 aa).

A mitochondrion-targeting transit peptide spans methionine 1–glycine 38. Positions histidine 31–alanine 53 are disordered. Over residues serine 33–proline 44 the composition is skewed to polar residues. [4Fe-4S] cluster is bound by residues cysteine 88 and cysteine 89. Hydroxyarginine is present on arginine 111. [4Fe-4S] cluster-binding residues include cysteine 153 and cysteine 183.

Belongs to the complex I 20 kDa subunit family. As to quaternary structure, core subunit of respiratory chain NADH dehydrogenase (Complex I) which is composed of 45 different subunits. This is a component of the iron-sulfur (IP) fragment of the enzyme. The cofactor is [4Fe-4S] cluster. Hydroxylated at Arg-111 by NDUFAF5 early in the pathway of assembly of complex I, before the formation of the juncture between peripheral and membrane arms.

Its subcellular location is the mitochondrion inner membrane. It carries out the reaction a ubiquinone + NADH + 5 H(+)(in) = a ubiquinol + NAD(+) + 4 H(+)(out). Its function is as follows. Core subunit of the mitochondrial membrane respiratory chain NADH dehydrogenase (Complex I) which catalyzes electron transfer from NADH through the respiratory chain, using ubiquinone as an electron acceptor. Essential for the catalytic activity of complex I. This chain is NADH dehydrogenase [ubiquinone] iron-sulfur protein 7, mitochondrial (NDUFS7), found in Homo sapiens (Human).